The primary structure comprises 483 residues: Cysteine--tRNA ligase (483 aa).

C28 contacts Zn(2+). A 'HIGH' region motif is present at residues 30–40 (MTVYDYCHLGH). Zn(2+) contacts are provided by C212, H237, and E241. Residues 269–273 (KMSKS) carry the 'KMSKS' region motif. K272 lines the ATP pocket.

This sequence belongs to the class-I aminoacyl-tRNA synthetase family. Monomer. Zn(2+) serves as cofactor.

The protein resides in the cytoplasm. It catalyses the reaction tRNA(Cys) + L-cysteine + ATP = L-cysteinyl-tRNA(Cys) + AMP + diphosphate. The chain is Cysteine--tRNA ligase from Bordetella avium (strain 197N).